The sequence spans 61 residues: Ferredoxin-3 (61 aa).

2 4Fe-4S ferredoxin-type domains span residues 2-31 (YKITIDTDKCTGDGECVDVCPVEVYELQDG) and 32-61 (KAVAVNEDECLGCESCVEVCEQDALTVEEN). 2 residues coordinate [3Fe-4S] cluster: C11 and C17. [4Fe-4S] cluster contacts are provided by C21, C41, C44, and C47. Position 51 (C51) interacts with [3Fe-4S] cluster.

Requires [3Fe-4S] cluster as cofactor. It depends on [4Fe-4S] cluster as a cofactor.

Its function is as follows. Ferredoxins are iron-sulfur proteins that transfer electrons in a wide variety of metabolic reactions. The chain is Ferredoxin-3 from Desulfocurvibacter africanus (Desulfovibrio africanus).